A 184-amino-acid polypeptide reads, in one-letter code: Envelope protein 169 (184 aa).

The Intravirion segment spans residues 1 to 6 (MKKYIK). Residues 7 to 27 (MYLVLLIAIILFITILVIFLI) traverse the membrane as a helical segment. The Virion surface portion of the chain corresponds to 28–184 (SGLFYPEQNP…TVMAIPRKVL (157 aa)).

It belongs to the asfivirus envelope protein p22 family.

Its subcellular location is the virion membrane. The protein localises to the host cell membrane. This chain is Envelope protein 169, found in Ornithodoros (relapsing fever ticks).